Reading from the N-terminus, the 124-residue chain is Protein Rev (124 aa).

Phosphoserine; by host CK2 is present on serine 5. Residues 19–27 form a homomultimerization region; the sequence is IIKILYQSN. Positions 25–51 are disordered; that stretch reads QSNPYPSPEGTRKARRNRRRRWRARQK. Residues 35-51 carry the Nuclear localization signal and RNA-binding (RRE) motif; that stretch reads TRKARRNRRRRWRARQK. Residues 37 to 50 show a composition bias toward basic residues; sequence KARRNRRRRWRARQ. A Nuclear export signal and binding to XPO1 motif is present at residues 74–85; it reads LELPELDKLSLQ. Positions 90–106 are enriched in polar residues; the sequence is TQDVGTSNTSQPQTATG. The interval 90-124 is disordered; the sequence is TQDVGTSNTSQPQTATGETVPAGGNYSILGKGAKN.

It belongs to the HIV-1 REV protein family. Homomultimer; when bound to the RRE. Multimeric assembly is essential for activity and may involve XPO1. Binds to human KPNB1, XPO1, TNPO1, RANBP5 and IPO7. Interacts with the viral Integrase. Interacts with human KHDRBS1. Interacts with human NAP1; this interaction decreases Rev multimerization and stimulates its activity. Interacts with human DEAD-box helicases DDX3 and DDX24; these interactions may serve for viral RNA export to the cytoplasm and packaging, respectively. Interacts with human PSIP1; this interaction may inhibit HIV-1 DNA integration by promoting dissociation of the Integrase-LEDGF/p75 complex. Asymmetrically arginine dimethylated at one site by host PRMT6. Methylation impairs the RNA-binding activity and export of viral RNA from the nucleus to the cytoplasm. Post-translationally, phosphorylated by protein kinase CK2. Presence of, and maybe binding to the N-terminus of the regulatory beta subunit of CK2 is necessary for CK2-mediated Rev's phosphorylation.

It is found in the host nucleus. The protein localises to the host nucleolus. It localises to the host cytoplasm. Functionally, escorts unspliced or incompletely spliced viral pre-mRNAs (late transcripts) out of the nucleus of infected cells. These pre-mRNAs carry a recognition sequence called Rev responsive element (RRE) located in the env gene, that is not present in fully spliced viral mRNAs (early transcripts). This function is essential since most viral proteins are translated from unspliced or partially spliced pre-mRNAs which cannot exit the nucleus by the pathway used by fully processed cellular mRNAs. Rev itself is translated from a fully spliced mRNA that readily exits the nucleus. Rev's nuclear localization signal (NLS) binds directly to KPNB1/Importin beta-1 without previous binding to KPNA1/Importin alpha-1. KPNB1 binds to the GDP bound form of RAN (Ran-GDP) and targets Rev to the nucleus. In the nucleus, the conversion from Ran-GDP to Ran-GTP dissociates Rev from KPNB1 and allows Rev's binding to the RRE in viral pre-mRNAs. Rev multimerization on the RRE via cooperative assembly exposes its nuclear export signal (NES) to the surface. Rev can then form a complex with XPO1/CRM1 and Ran-GTP, leading to nuclear export of the complex. Conversion from Ran-GTP to Ran-GDP mediates dissociation of the Rev/RRE/XPO1/RAN complex, so that Rev can return to the nucleus for a subsequent round of export. Beside KPNB1, also seems to interact with TNPO1/Transportin-1, RANBP5/IPO5 and IPO7/RANBP7 for nuclear import. The nucleoporin-like HRB/RIP is an essential cofactor that probably indirectly interacts with Rev to release HIV RNAs from the perinuclear region to the cytoplasm. In Pan (chimpanzees), this protein is Protein Rev.